We begin with the raw amino-acid sequence, 693 residues long: tRNA (guanine(27)-N(2))-dimethyltransferase (693 aa).

The Nucleolar localization signal motif lies at 95-99; the sequence is HKLRR. The C2H2-type zinc-finger motif lies at 144–166; sequence YHCIICSATITRRTDMLGHVRRH. In terms of domain architecture, Trm1 methyltransferase spans 187–648; it reads EILKEADTDV…APLMQFKSIL (462 aa). S-adenosyl-L-methionine is bound by residues R220, D267, D317, and A318. Zn(2+) contacts are provided by C448, C451, C473, and C475. Residue K545 forms a Glycyl lysine isopeptide (Lys-Gly) (interchain with G-Cter in SUMO2) linkage. 2 positions are modified to phosphoserine: S572 and S667.

The protein belongs to the class I-like SAM-binding methyltransferase superfamily. Trm1 family.

Its subcellular location is the nucleus. The protein resides in the nucleolus. The enzyme catalyses guanosine(27) in tRNA(Tyr) + 2 S-adenosyl-L-methionine = N(2)-dimethylguanosine(27) in tRNA(Tyr) + 2 S-adenosyl-L-homocysteine + 2 H(+). Functionally, specifically dimethylates a single guanine residue at position 27 of tRNA(Tyr) using S-adenosyl-L-methionine as donor of the methyl groups. Dimethylation at position 27 of tRNA(Tyr) is required for efficient translation of tyrosine codons. Also required to maintain 3-(3-amino-3-carboxypropyl)uridine (acp3U) in the D-loop of several cytoplasmic tRNAs. This Macaca fascicularis (Crab-eating macaque) protein is tRNA (guanine(27)-N(2))-dimethyltransferase (TRMT1L).